The following is a 198-amino-acid chain: Lipid A 4'-phosphatase (198 aa).

Residues 143-165 form a helical membrane-spanning segment; the sequence is AGQHTILQVTIGSLIAWGFAYLF.

Belongs to the lipid A LpxF 4'-phosphatase family.

It is found in the cell inner membrane. Its pathway is bacterial outer membrane biogenesis; LPS lipid A biosynthesis. In terms of biological role, removes the 4'-phosphate group from tetra- and hexaacylated lipid A species, has no 1-phosphatase or Kdo hydrolase activity. Absence of the 4'-phosphate group renders the bacteria resistant to host-derived cationic antimicrobial peptides (CAMP), allowing it to camouflage itself from the host innate immune response, and plays a critical role in the long-term colonization of the host's stomach. The chain is Lipid A 4'-phosphatase from Helicobacter pylori (strain J99 / ATCC 700824) (Campylobacter pylori J99).